The chain runs to 1663 residues: Glutamine-rich protein 2 (1663 aa).

Disordered regions lie at residues 80 to 239 (HGGF…LVPA), 423 to 481 (GLVQ…GTGQ), 575 to 615 (AQPR…QHGL), 880 to 925 (TYQQ…QVYP), and 948 to 984 (RGPG…APGQ). Polar residues-rich tracts occupy residues 84 to 103 (TSLT…QPSI) and 131 to 150 (GVSS…QQQP). Residues 171–182 (SDSDRHRSREKL) are compositionally biased toward basic and acidic residues. The span at 206–217 (QPSSVPASQSQV) shows a compositional bias: low complexity. Over residues 958–975 (HGQEGLDPNRTRASDRHG) the composition is skewed to basic and acidic residues. Coiled coils occupy residues 1085–1160 (KTVK…MENS) and 1286–1325 (EDHR…KADK). Basic and acidic residues predominate over residues 1609 to 1619 (TRLPGILRKDS). The tract at residues 1609–1663 (TRLPGILRKDSSGTSKRKSQQPRPHVHRPPSLSSNGQLPSRPQSAQISAGNTSER) is disordered. Residues 1623–1636 (SKRKSQQPRPHVHR) show a composition bias toward basic residues. Residues 1639–1663 (SLSSNGQLPSRPQSAQISAGNTSER) show a composition bias toward polar residues.

In terms of assembly, interacts with AKAP3, ODF2 and TSSK4. Interacts with AKAP4. As to expression, expressed in the sperm.

It localises to the nucleus membrane. It is found in the nucleus. The protein resides in the cytoplasm. Its subcellular location is the cell projection. The protein localises to the cilium. It localises to the flagellum. Has an essential role in the formation of sperm flagella and flagellar structure maintainance. It acts as a suppressor of ubiquitination and degradation of proteins involved in flagellar development and motility. This Homo sapiens (Human) protein is Glutamine-rich protein 2 (QRICH2).